A 238-amino-acid polypeptide reads, in one-letter code: Probable transcriptional regulatory protein YeeN (238 aa).

The protein belongs to the TACO1 family. YeeN subfamily.

The protein resides in the cytoplasm. In Shigella sonnei (strain Ss046), this protein is Probable transcriptional regulatory protein YeeN.